We begin with the raw amino-acid sequence, 409 residues long: Mitochondrial inner membrane protein oxa1-2 (409 aa).

The chain crosses the membrane as a helical span at residues 76-96 (VVYTPSLPLSSSVLASFSFLP). Over 97 to 114 (HNILQNGLNTLHIWSGLP) the chain is Mitochondrial intermembrane. A helical membrane pass occupies residues 115-135 (WWASIAACAVAMRIAVFPIML). Topologically, residues 136–188 (KMMKTSAKLAIINPKVAEHMSVLSKAKAEGNSELMMQATTQIQNLYKVNNVNP) are mitochondrial matrix. A helical transmembrane segment spans residues 189–209 (LNLLSAPVFQGILFISFFYAL). The Mitochondrial intermembrane portion of the chain corresponds to 210 to 235 (KTMAGVPVEGFTDGGFWWVNDLSQPD). The helical transmembrane segment at 236–256 (PLHIFPVANGLLMLLNIELGS) threads the bilayer. Topologically, residues 257 to 275 (ETGSNKVAMSPSMKKFFRF) are mitochondrial matrix. A helical transmembrane segment spans residues 276 to 296 (LCLASPLFTMNFPMAIFMYWF). Residues 297-409 (PSNVFSVFQG…SVTKPTEKKD (113 aa)) lie on the Mitochondrial intermembrane side of the membrane. Residues 369-409 (TDTNNEQKPTNNSTITKATTLSDNSQNDKSSSVTKPTEKKD) form a disordered region. Residues 374-403 (EQKPTNNSTITKATTLSDNSQNDKSSSVTK) are compositionally biased toward polar residues.

The protein belongs to the OXA1/ALB3/YidC family.

Its subcellular location is the mitochondrion inner membrane. Its function is as follows. Required for the insertion of integral membrane proteins into the mitochondrial inner membrane. Essential for the activity and assembly of cytochrome c oxidase. It is essential for viability while oxa101 is not. When both are deleted the cell is non-viable, suggesting that oxa101 act as a back-up for oxa102. The sequence is that of Mitochondrial inner membrane protein oxa1-2 (oxa102) from Schizosaccharomyces pombe (strain 972 / ATCC 24843) (Fission yeast).